Here is a 650-residue protein sequence, read N- to C-terminus: XK-related protein 4 (650 aa).

Basic and acidic residues predominate over residues 1–15; the sequence is MAAKSDGRLKMKKSS. The interval 1-44 is disordered; sequence MAAKSDGRLKMKKSSDVAFTPLQNSDHSGSVQGLAPGLPSGSGA. Residues 21-31 show a composition bias toward polar residues; that stretch reads PLQNSDHSGSV. 2 consecutive transmembrane segments (helical) span residues 114–134 and 144–164; these read WILAAVAVYFADVGTDVWLAV and WFGLTLFFVVLGSLSVQVFSF. At S200 the chain carries Phosphoserine. Positions 200-238 are disordered; that stretch reads SAAGEGEARPSTPQRQASNASKSNIAAANSGSNSSGATR. Residues 216-238 show a composition bias toward low complexity; the sequence is ASNASKSNIAAANSGSNSSGATR. 8 helical membrane-spanning segments follow: residues 248–268, 306–326, 331–351, 365–385, 396–418, 428–448, 457–477, and 487–507; these read CSFCIWLLQSLIHILQLGQIW, HLLATFLESAPQLVLQLCIIV, LQALQGFTAAASLVSLAWALA, KPISYMAVIIQFCWHFFTIAA, VFQLYFGIFIVLHWCIMTFWIVH, WEEIVFDMVVGIIYIFSWFNV, LFIYYFVILLENTALSALWYL, and FAIPALCVVFSSFLTGVVFML.

This sequence belongs to the XK family. In terms of assembly, homodimer; homodimerization takes place upon caspase cleavage. Interacts with the processed C-terminus of XRCC4 (protein XRCC4, C-terminus); interaction promotes the phospholipid scramblase activity. Undergoes proteolytic processing by caspase-3 (CASP3), caspase-6 (CASP6) and caspase-7 (CASP7) to generate the XK-related protein 4, processed form, leading to its activation.

Its subcellular location is the cell membrane. It carries out the reaction a 1,2-diacyl-sn-glycero-3-phospho-L-serine(in) = a 1,2-diacyl-sn-glycero-3-phospho-L-serine(out). With respect to regulation, phospholipid scramblase activity is activated upon caspase cleavage to generate the XK-related protein 4, processed form. Does not act prior the onset of apoptosis. Homodimerizes upon caspase cleavage. Phospholipid scramblase activity is activated following interaction with the processed C-terminus of XRCC4 (protein XRCC4, C-terminus). Its function is as follows. Phospholipid scramblase that promotes phosphatidylserine exposure on apoptotic cell surface. Phosphatidylserine is a specific marker only present at the surface of apoptotic cells and acts as a specific signal for engulfment. This chain is XK-related protein 4, found in Homo sapiens (Human).